The chain runs to 435 residues: 5-methylthioadenosine/S-adenosylhomocysteine deaminase (435 aa).

Positions 65 and 67 each coordinate Zn(2+). Positions 94, 150, and 189 each coordinate substrate. His216 contacts Zn(2+). Positions 219 and 304 each coordinate substrate. Position 304 (Asp304) interacts with Zn(2+).

The protein belongs to the metallo-dependent hydrolases superfamily. MTA/SAH deaminase family. Requires Zn(2+) as cofactor.

It catalyses the reaction S-adenosyl-L-homocysteine + H2O + H(+) = S-inosyl-L-homocysteine + NH4(+). The catalysed reaction is S-methyl-5'-thioadenosine + H2O + H(+) = S-methyl-5'-thioinosine + NH4(+). Its function is as follows. Catalyzes the deamination of 5-methylthioadenosine and S-adenosyl-L-homocysteine into 5-methylthioinosine and S-inosyl-L-homocysteine, respectively. Is also able to deaminate adenosine. The polypeptide is 5-methylthioadenosine/S-adenosylhomocysteine deaminase (Bacillus cereus (strain ATCC 10987 / NRS 248)).